Here is a 266-residue protein sequence, read N- to C-terminus: Putative pyruvate, phosphate dikinase regulatory protein (266 aa).

Residue 149–156 (GVSRTSKT) coordinates ADP.

This sequence belongs to the pyruvate, phosphate/water dikinase regulatory protein family. PDRP subfamily.

It catalyses the reaction N(tele)-phospho-L-histidyl/L-threonyl-[pyruvate, phosphate dikinase] + ADP = N(tele)-phospho-L-histidyl/O-phospho-L-threonyl-[pyruvate, phosphate dikinase] + AMP + H(+). The catalysed reaction is N(tele)-phospho-L-histidyl/O-phospho-L-threonyl-[pyruvate, phosphate dikinase] + phosphate + H(+) = N(tele)-phospho-L-histidyl/L-threonyl-[pyruvate, phosphate dikinase] + diphosphate. In terms of biological role, bifunctional serine/threonine kinase and phosphorylase involved in the regulation of the pyruvate, phosphate dikinase (PPDK) by catalyzing its phosphorylation/dephosphorylation. The chain is Putative pyruvate, phosphate dikinase regulatory protein from Halothermothrix orenii (strain H 168 / OCM 544 / DSM 9562).